We begin with the raw amino-acid sequence, 96 residues long: Large ribosomal subunit protein uL23 (96 aa).

This sequence belongs to the universal ribosomal protein uL23 family. Part of the 50S ribosomal subunit. Contacts protein L29, and trigger factor when it is bound to the ribosome.

Functionally, one of the early assembly proteins it binds 23S rRNA. One of the proteins that surrounds the polypeptide exit tunnel on the outside of the ribosome. Forms the main docking site for trigger factor binding to the ribosome. In Caldicellulosiruptor bescii (strain ATCC BAA-1888 / DSM 6725 / KCTC 15123 / Z-1320) (Anaerocellum thermophilum), this protein is Large ribosomal subunit protein uL23.